Here is a 106-residue protein sequence, read N- to C-terminus: Ferredoxin (106 aa).

Residues Cys8 and Cys16 each coordinate [3Fe-4S] cluster. Cys20, Cys39, Cys42, and Cys45 together coordinate [4Fe-4S] cluster. Residues 30–59 form the 4Fe-4S ferredoxin-type domain; sequence RMLYIHPDECVDCGACEPVCPVEAIYYEDD. Cys49 is a binding site for [3Fe-4S] cluster. The disordered stretch occupies residues 81–106; the sequence is PGGASKVGQTDNDPQAIKDLPPQGED.

[4Fe-4S] cluster serves as cofactor. It depends on [3Fe-4S] cluster as a cofactor.

Its function is as follows. Ferredoxins are iron-sulfur proteins that transfer electrons in a wide variety of metabolic reactions. In Mycolicibacterium smegmatis (Mycobacterium smegmatis), this protein is Ferredoxin (fdxA).